The following is a 163-amino-acid chain: UPF0262 protein RPD_4278 (163 aa).

It belongs to the UPF0262 family.

The chain is UPF0262 protein RPD_4278 from Rhodopseudomonas palustris (strain BisB5).